Reading from the N-terminus, the 131-residue chain is Cytochrome b5 (131 aa).

The Cytochrome b5 heme-binding domain occupies 3–79; the sequence is AKIFSLDEVS…LEEYLIGSLD (77 aa). Heme is bound by residues histidine 38 and histidine 62. Residues 108–125 form a helical membrane-spanning segment; the sequence is IILPALAIIGALVYKYVI.

This sequence belongs to the cytochrome b5 family.

The protein localises to the endoplasmic reticulum membrane. Its subcellular location is the microsome membrane. In terms of biological role, membrane bound hemoprotein which function as an electron carrier for several membrane bound oxygenases. This Rhizopus stolonifer (Rhizopus nigricans) protein is Cytochrome b5.